The chain runs to 32 residues: MSDIN-like toxin proprotein 3 (32 aa).

Positions 1–10 (MSDINATRLP) are excised as a propeptide. The segment at residues 11–17 (SFFFPIP) is a cross-link (cyclopeptide (Ser-Pro)). Residues 18 to 32 (CISDDIEMVLTRGER) constitute a propeptide that is removed on maturation.

The protein belongs to the MSDIN fungal toxin family. In terms of processing, processed by the macrocyclase-peptidase enzyme POPB to yield a toxic cyclic heptapeptide. POPB first removes 10 residues from the N-terminus. Conformational trapping of the remaining peptide forces the enzyme to release this intermediate rather than proceed to macrocyclization. The enzyme rebinds the remaining peptide in a different conformation and catalyzes macrocyclization of the N-terminal 8 residues.

In terms of biological role, probable toxin that belongs to the MSDIN-like toxin family responsible for a large number of food poisoning cases and deaths. The protein is MSDIN-like toxin proprotein 3 of Amanita phalloides (Death cap).